A 339-amino-acid polypeptide reads, in one-letter code: tRNA N6-adenosine threonylcarbamoyltransferase (339 aa).

2 residues coordinate Fe cation: histidine 111 and histidine 115. Substrate contacts are provided by residues 139 to 143 (LVSGG), aspartate 172, glycine 185, aspartate 189, and asparagine 280. Aspartate 308 provides a ligand contact to Fe cation.

It belongs to the KAE1 / TsaD family. Requires Fe(2+) as cofactor.

The protein localises to the cytoplasm. It carries out the reaction L-threonylcarbamoyladenylate + adenosine(37) in tRNA = N(6)-L-threonylcarbamoyladenosine(37) in tRNA + AMP + H(+). Functionally, required for the formation of a threonylcarbamoyl group on adenosine at position 37 (t(6)A37) in tRNAs that read codons beginning with adenine. Is involved in the transfer of the threonylcarbamoyl moiety of threonylcarbamoyl-AMP (TC-AMP) to the N6 group of A37, together with TsaE and TsaB. TsaD likely plays a direct catalytic role in this reaction. The sequence is that of tRNA N6-adenosine threonylcarbamoyltransferase from Bacteroides thetaiotaomicron (strain ATCC 29148 / DSM 2079 / JCM 5827 / CCUG 10774 / NCTC 10582 / VPI-5482 / E50).